The sequence spans 695 residues: Spermidine/spermine N(1)-acetyltransferase-like protein 1 (695 aa).

Polar residues-rich tracts occupy residues 1-39 (MNQS…QGSA), 52-68 (PSMS…NLPD), and 78-98 (DTWQ…SQLV). Disordered regions lie at residues 1 to 274 (MNQS…MNQM), 290 to 332 (DMKQ…PGMW), 344 to 375 (ASIS…NQSG), and 387 to 493 (RQSG…GLSQ). The segment covering 105-122 (SQPDPSQPGPSQSGPSQS) has biased composition (low complexity). 7 stretches are compositionally biased toward polar residues: residues 123 to 179 (RMRQ…TGLS), 197 to 208 (GVQQPGISQQVP), 231 to 266 (PDTS…QPSP), 294 to 310 (PSMS…NLPD), 355 to 375 (APSQ…NQSG), 389 to 422 (SGGS…TGLS), and 459 to 471 (PGTS…QTGM). One can recognise an N-acetyltransferase domain in the interval 529 to 695 (FQIRHAEAGD…EELLDMAWEE (167 aa)). 552–553 (CE) contributes to the substrate binding site. Acetyl-CoA contacts are provided by residues 618 to 620 (FYV) and 626 to 631 (GLGIGA). Substrate-binding positions include 650–652 (HFL) and Glu-676.

This sequence belongs to the acetyltransferase family.

The protein is Spermidine/spermine N(1)-acetyltransferase-like protein 1 (SATL1) of Homo sapiens (Human).